A 462-amino-acid polypeptide reads, in one-letter code: Bifunctional dihydrofolate reductase-thymidylate synthase (462 aa).

The DHFR domain occupies 6–165 (TFSMVLAMTL…INYDYQHLIN (160 aa)). V10 serves as a coordination point for substrate. Residues A12 and 18–24 (GIGYQNR) each bind NADP(+). D32 is a substrate binding site. NADP(+)-binding positions include 49-51 (RKT) and 68-71 (ISKN). I101 is a substrate binding site. 102 to 109 (GGKRIFEE) is an NADP(+) binding site. T122 contributes to the substrate binding site. The interval 180–462 (ENQYLDMITK…HDKIEMKMAV (283 aa)) is thymidylate synthase. A dUMP-binding site is contributed by R200. The active site involves C345. Residues H346, 364 to 368 (QRSCD), N376, and 406 to 408 (HIY) each bind dUMP.

This sequence in the N-terminal section; belongs to the dihydrofolate reductase family. The protein in the C-terminal section; belongs to the thymidylate synthase family.

The catalysed reaction is (6S)-5,6,7,8-tetrahydrofolate + NADP(+) = 7,8-dihydrofolate + NADPH + H(+). It catalyses the reaction dUMP + (6R)-5,10-methylene-5,6,7,8-tetrahydrofolate = 7,8-dihydrofolate + dTMP. It functions in the pathway cofactor biosynthesis; tetrahydrofolate biosynthesis; 5,6,7,8-tetrahydrofolate from 7,8-dihydrofolate: step 1/1. Its function is as follows. Bifunctional enzyme. Involved in de novo dTMP biosynthesis. Key enzyme in folate metabolism. Catalyzes an essential reaction for de novo glycine and purine synthesis, DNA precursor synthesis, and for the conversion of dUMP to dTMP. The sequence is that of Bifunctional dihydrofolate reductase-thymidylate synthase from Paramecium tetraurelia.